Reading from the N-terminus, the 375-residue chain is Serpentine receptor class alpha-39 (375 aa).

7 helical membrane passes run 17-37 (LFAIIFQGTSGYLTFPILFII), 51-71 (LVFLMMLNVVSCLLLGGLTAW), 99-119 (IRGTFLFAFCLVTTSHAGILL), 138-158 (LGTILAIVAVAVAATAIFILL), 183-203 (VYVMFFVQLLLDAVISIVHLV), 236-256 (TPLLILSNVTIGVYIFIVSVF), and 275-295 (LFIMPHMPFMFTSLILVELWL).

This sequence belongs to the nematode receptor-like protein sra family.

The protein resides in the membrane. This Caenorhabditis elegans protein is Serpentine receptor class alpha-39 (sra-39).